Here is a 354-residue protein sequence, read N- to C-terminus: Uroporphyrinogen decarboxylase (354 aa).

Residues 27–31 (RQAGR), Asp-77, Tyr-154, Thr-209, and His-327 contribute to the substrate site.

Belongs to the uroporphyrinogen decarboxylase family. As to quaternary structure, homodimer.

Its subcellular location is the cytoplasm. The enzyme catalyses uroporphyrinogen III + 4 H(+) = coproporphyrinogen III + 4 CO2. It participates in porphyrin-containing compound metabolism; protoporphyrin-IX biosynthesis; coproporphyrinogen-III from 5-aminolevulinate: step 4/4. In terms of biological role, catalyzes the decarboxylation of four acetate groups of uroporphyrinogen-III to yield coproporphyrinogen-III. This is Uroporphyrinogen decarboxylase from Sodalis glossinidius (strain morsitans).